Reading from the N-terminus, the 265-residue chain is Type III pantothenate kinase (265 aa).

6 to 13 (DVGNTNIV) is a binding site for ATP. A substrate-binding site is contributed by 112–115 (GADR). The active-site Proton acceptor is aspartate 114. Aspartate 134 provides a ligand contact to K(+). Threonine 137 lines the ATP pocket. A substrate-binding site is contributed by threonine 189.

Belongs to the type III pantothenate kinase family. As to quaternary structure, homodimer. NH4(+) serves as cofactor. Requires K(+) as cofactor.

Its subcellular location is the cytoplasm. The catalysed reaction is (R)-pantothenate + ATP = (R)-4'-phosphopantothenate + ADP + H(+). It participates in cofactor biosynthesis; coenzyme A biosynthesis; CoA from (R)-pantothenate: step 1/5. Its function is as follows. Catalyzes the phosphorylation of pantothenate (Pan), the first step in CoA biosynthesis. The polypeptide is Type III pantothenate kinase (Saccharopolyspora erythraea (strain ATCC 11635 / DSM 40517 / JCM 4748 / NBRC 13426 / NCIMB 8594 / NRRL 2338)).